The chain runs to 707 residues: tRNA 5-methylaminomethyl-2-thiouridine biosynthesis bifunctional protein MnmC (707 aa).

Residues 1 to 264 (MTKKLEHEYI…KREMLFGTFE (264 aa)) are tRNA (mnm(5)s(2)U34)-methyltransferase. The FAD-dependent cmnm(5)s(2)U34 oxidoreductase stretch occupies residues 312–707 (IGGGLAGAHA…LFRDLTRNRI (396 aa)).

The protein in the N-terminal section; belongs to the methyltransferase superfamily. tRNA (mnm(5)s(2)U34)-methyltransferase family. In the C-terminal section; belongs to the DAO family. FAD is required as a cofactor.

It is found in the cytoplasm. The catalysed reaction is 5-aminomethyl-2-thiouridine(34) in tRNA + S-adenosyl-L-methionine = 5-methylaminomethyl-2-thiouridine(34) in tRNA + S-adenosyl-L-homocysteine + H(+). Functionally, catalyzes the last two steps in the biosynthesis of 5-methylaminomethyl-2-thiouridine (mnm(5)s(2)U) at the wobble position (U34) in tRNA. Catalyzes the FAD-dependent demodification of cmnm(5)s(2)U34 to nm(5)s(2)U34, followed by the transfer of a methyl group from S-adenosyl-L-methionine to nm(5)s(2)U34, to form mnm(5)s(2)U34. The sequence is that of tRNA 5-methylaminomethyl-2-thiouridine biosynthesis bifunctional protein MnmC from Saccharophagus degradans (strain 2-40 / ATCC 43961 / DSM 17024).